The sequence spans 334 residues: Aspartate carbamoyltransferase catalytic subunit (334 aa).

The carbamoyl phosphate site is built by Arg71 and Thr72. Residue Lys99 coordinates L-aspartate. Residues Arg121, His151, and Gln154 each coordinate carbamoyl phosphate. L-aspartate is bound by residues Arg184 and Arg239. Residues Gly280 and Pro281 each coordinate carbamoyl phosphate.

It belongs to the aspartate/ornithine carbamoyltransferase superfamily. ATCase family. In terms of assembly, heterododecamer (2C3:3R2) of six catalytic PyrB chains organized as two trimers (C3), and six regulatory PyrI chains organized as three dimers (R2).

The enzyme catalyses carbamoyl phosphate + L-aspartate = N-carbamoyl-L-aspartate + phosphate + H(+). It functions in the pathway pyrimidine metabolism; UMP biosynthesis via de novo pathway; (S)-dihydroorotate from bicarbonate: step 2/3. Its function is as follows. Catalyzes the condensation of carbamoyl phosphate and aspartate to form carbamoyl aspartate and inorganic phosphate, the committed step in the de novo pyrimidine nucleotide biosynthesis pathway. The polypeptide is Aspartate carbamoyltransferase catalytic subunit (Pseudomonas fluorescens biotype A).